Here is a 544-residue protein sequence, read N- to C-terminus: Probable protein kinase UbiB (544 aa).

The 379-residue stretch at 123 to 501 (EFDIKPLASA…KRQQATGKFL (379 aa)) folds into the Protein kinase domain. ATP-binding positions include 129 to 137 (LASASIAQV) and Lys152. The active-site Proton acceptor is Asp287. The next 2 helical transmembrane spans lie at 496–516 (ATGK…AILV) and 519–539 (AYEQ…LLSW).

Belongs to the ABC1 family. UbiB subfamily.

It localises to the cell inner membrane. Its pathway is cofactor biosynthesis; ubiquinone biosynthesis [regulation]. Its function is as follows. Is probably a protein kinase regulator of UbiI activity which is involved in aerobic coenzyme Q (ubiquinone) biosynthesis. In Vibrio parahaemolyticus serotype O3:K6 (strain RIMD 2210633), this protein is Probable protein kinase UbiB.